Reading from the N-terminus, the 106-residue chain is Large ribosomal subunit protein uL24 (106 aa).

Belongs to the universal ribosomal protein uL24 family. In terms of assembly, part of the 50S ribosomal subunit.

One of two assembly initiator proteins, it binds directly to the 5'-end of the 23S rRNA, where it nucleates assembly of the 50S subunit. Its function is as follows. One of the proteins that surrounds the polypeptide exit tunnel on the outside of the subunit. This Polaromonas sp. (strain JS666 / ATCC BAA-500) protein is Large ribosomal subunit protein uL24.